Here is a 459-residue protein sequence, read N- to C-terminus: Cysteine--tRNA ligase (459 aa).

A Zn(2+)-binding site is contributed by C28. Residues 30-40 carry the 'HIGH' region motif; the sequence is VTVYDLCHIGH. The Zn(2+) site is built by C209, H234, and E238. A 'KMSKS' region motif is present at residues 266-270; it reads KMSKS. ATP is bound at residue K269.

The protein belongs to the class-I aminoacyl-tRNA synthetase family. As to quaternary structure, monomer. The cofactor is Zn(2+).

The protein localises to the cytoplasm. It catalyses the reaction tRNA(Cys) + L-cysteine + ATP = L-cysteinyl-tRNA(Cys) + AMP + diphosphate. In Histophilus somni (strain 2336) (Haemophilus somnus), this protein is Cysteine--tRNA ligase.